The sequence spans 183 residues: dTDP-4-dehydrorhamnose 3,5-epimerase (183 aa).

Residues Arg-24, Glu-29, 48-50 (QDN), and Arg-60 contribute to the substrate site. His-63 functions as the Proton acceptor in the catalytic mechanism. 2 residues coordinate substrate: Lys-73 and His-120. Tyr-133 serves as the catalytic Proton donor. Substrate is bound by residues Glu-144 and Lys-169.

It belongs to the dTDP-4-dehydrorhamnose 3,5-epimerase family. As to quaternary structure, homodimer.

The catalysed reaction is dTDP-4-dehydro-6-deoxy-alpha-D-glucose = dTDP-4-dehydro-beta-L-rhamnose. It functions in the pathway carbohydrate biosynthesis; dTDP-L-rhamnose biosynthesis. The protein operates within bacterial outer membrane biogenesis; LPS O-antigen biosynthesis. Catalyzes the epimerization of the C3' and C5'positions of dTDP-6-deoxy-D-xylo-4-hexulose, forming dTDP-6-deoxy-L-lyxo-4-hexulose. The polypeptide is dTDP-4-dehydrorhamnose 3,5-epimerase (Salmonella typhimurium (strain LT2 / SGSC1412 / ATCC 700720)).